We begin with the raw amino-acid sequence, 257 residues long: tRNA pseudouridine synthase A (257 aa).

Residue Asp-53 is the Nucleophile of the active site. Substrate is bound at residue Tyr-111.

This sequence belongs to the tRNA pseudouridine synthase TruA family. In terms of assembly, homodimer.

It catalyses the reaction uridine(38/39/40) in tRNA = pseudouridine(38/39/40) in tRNA. In terms of biological role, formation of pseudouridine at positions 38, 39 and 40 in the anticodon stem and loop of transfer RNAs. This is tRNA pseudouridine synthase A from Xanthomonas oryzae pv. oryzae (strain MAFF 311018).